Reading from the N-terminus, the 241-residue chain is Pre-rRNA-processing protein pno1 (241 aa).

The disordered stretch occupies residues 48–71 (APAKTSAEKKRGAKPQMRRVPIPP). Thr-52 is modified (phosphothreonine). Residues 162–214 (GDHLSRAIGRIAGQGGKTKFAIENASRTRIVLADSKIHILGGFTNIRIAKDAV) form the KH domain.

Belongs to the PNO1 family. Component of the small ribosomal subunit, ribosomal RNA processing complex (SSU RRP complex).

The protein resides in the cytoplasm. It localises to the nucleus. The protein localises to the nucleolus. In terms of biological role, required for small ribosomal subunit (SSU) synthesis. Has a role in the processing of early nucleolar and late cytoplasmic pre-RNA species. This is Pre-rRNA-processing protein pno1 (rbp28) from Schizosaccharomyces pombe (strain 972 / ATCC 24843) (Fission yeast).